Consider the following 380-residue polypeptide: Cytochrome b (380 aa).

The next 4 membrane-spanning stretches (helical) occupy residues 33 to 53 (FGSLLGLCLIIQILTGLFLAM), 77 to 98 (WLIRYMHANGASMFFICLFLHV), 113 to 133 (WNMGIMLLFTVMATAFMGYVL), and 178 to 198 (FFAFHFILPFIITALVLVHLL). Heme b-binding residues include His83 and His97. Heme b contacts are provided by His182 and His196. His201 provides a ligand contact to a ubiquinone. 4 helical membrane passes run 226-246 (IKDFLGILILLMASMILTLFF), 288-308 (LGGVLALILSILILAFMPLLH), 320-340 (ITQIMYWTLVADLLILTWIGG), and 347-367 (FITIGQTASIAYFAIILIFMP).

The protein belongs to the cytochrome b family. The cytochrome bc1 complex contains 11 subunits: 3 respiratory subunits (MT-CYB, CYC1 and UQCRFS1), 2 core proteins (UQCRC1 and UQCRC2) and 6 low-molecular weight proteins (UQCRH/QCR6, UQCRB/QCR7, UQCRQ/QCR8, UQCR10/QCR9, UQCR11/QCR10 and a cleavage product of UQCRFS1). This cytochrome bc1 complex then forms a dimer. The cofactor is heme b.

Its subcellular location is the mitochondrion inner membrane. Its function is as follows. Component of the ubiquinol-cytochrome c reductase complex (complex III or cytochrome b-c1 complex) that is part of the mitochondrial respiratory chain. The b-c1 complex mediates electron transfer from ubiquinol to cytochrome c. Contributes to the generation of a proton gradient across the mitochondrial membrane that is then used for ATP synthesis. The chain is Cytochrome b (MT-CYB) from Microtus oregoni (Creeping vole).